The following is a 111-amino-acid chain: Repressed By RIM101 protein 1 (111 aa).

Residues 1–19 form the signal peptide; that stretch reads MKFSTTLLALTASIAAVMS. Residues 71-90 are disordered; that stretch reads SGASSATGGSSAAKSGSSSG. Ser-81 is lipidated: GPI-anchor amidated serine. Positions 82–111 are cleaved as a propeptide — removed in mature form; the sequence is AAKSGSSSGAGFAPVAGAGSLAAIAGLLLL.

In terms of processing, the GPI-anchor is attached to the protein in the endoplasmic reticulum and serves to target the protein to the cell surface. There, the glucosamine-inositol phospholipid moiety is cleaved off and the GPI-modified mannoprotein is covalently attached via its lipidless GPI glycan remnant to the 1,6-beta-glucan of the outer cell wall layer.

The protein resides in the secreted. Its subcellular location is the cell wall. It is found in the membrane. In terms of biological role, probable cell wall protein required for filamentation at low pH. In Candida albicans (strain SC5314 / ATCC MYA-2876) (Yeast), this protein is Repressed By RIM101 protein 1 (RBR1).